Here is a 122-residue protein sequence, read N- to C-terminus: Photosystem II extrinsic protein U (122 aa).

The N-terminal stretch at 1–26 is a signal peptide; that stretch reads MKTIVRLFAILMVLISSVGFVGSAVA.

The protein belongs to the PsbU family. As to quaternary structure, PSII is composed of 1 copy each of membrane proteins PsbA, PsbB, PsbC, PsbD, PsbE, PsbF, PsbH, PsbI, PsbJ, PsbK, PsbL, PsbM, PsbT, PsbX, PsbY, PsbZ, Psb30/Ycf12, peripheral proteins PsbO, CyanoQ (PsbQ), PsbU, PsbV and a large number of cofactors. It forms dimeric complexes.

The protein localises to the cellular thylakoid membrane. One of the extrinsic, lumenal subunits of photosystem II (PSII). PSII is a light-driven water plastoquinone oxidoreductase, using light energy to abstract electrons from H(2)O, generating a proton gradient subsequently used for ATP formation. The extrinsic proteins stabilize the structure of photosystem II oxygen-evolving complex (OEC), the ion environment of oxygen evolution and protect the OEC against heat-induced inactivation. The protein is Photosystem II extrinsic protein U of Crocosphaera subtropica (strain ATCC 51142 / BH68) (Cyanothece sp. (strain ATCC 51142)).